Consider the following 393-residue polypeptide: Putative mitochondrial cysteine synthase (393 aa).

A helical membrane pass occupies residues 12–31; sequence LAWRECISIASVLIGAYASY. The residue at position 86 (Lys86) is an N6-(pyridoxal phosphate)lysine. Pyridoxal 5'-phosphate contacts are provided by residues 230–234 and Ser338; that span reads GTGGT.

This sequence belongs to the cysteine synthase/cystathionine beta-synthase family. Requires pyridoxal 5'-phosphate as cofactor.

It is found in the mitochondrion. The protein localises to the mitochondrion outer membrane. It catalyses the reaction O-acetyl-L-serine + hydrogen sulfide = L-cysteine + acetate. Putative cysteine synthase that catalyzes the conversion of O-acetyl-L-serine (OAS) into cysteine, the last step in the cysteine biosynthesis pathway. However, this CS-like protein is unlikely to function in cysteine biosynthesis. It seems that in S.cerevisiae cysteine biosynthesis occurs exclusively through the cystathionine pathway and not via direct incorporation of sulfur into OAS. This Saccharomyces cerevisiae (strain ATCC 204508 / S288c) (Baker's yeast) protein is Putative mitochondrial cysteine synthase.